Reading from the N-terminus, the 670-residue chain is Acetolactate synthase, chloroplastic (670 aa).

Low complexity-rich tracts occupy residues 1–48 and 55–77; these read MAAA…SSSS and KSSS…TTPS. The N-terminal 55 residues, 1–55, are a transit peptide targeting the chloroplast; that stretch reads MAAATTTTTTSSSISFSTKPSPSSSKSPLPISRFSLPFSLNPNKSSSSSRRRGIK. The interval 1 to 94 is disordered; it reads MAAATTTTTT…ETFISRFAPD (94 aa). Residue Glu-144 participates in thiamine diphosphate binding. An FAD-binding site is contributed by Ser-186. Gln-207 contacts thiamine diphosphate. Residues Lys-220 and Arg-246 each coordinate (R)-imazaquin. Residue Arg-246 participates in FAD binding. Residue Lys-256 participates in chlorimuron-ethyl binding. Residues Gly-308 and 331–332 each bind FAD; that span reads TL. Cys-340 is subject to Cysteine sulfinic acid (-SO2H). FAD contacts are provided by residues 349 to 352 and 371 to 375; these read LGMH and GVRFD. Chlorimuron-ethyl is bound at residue 376–377; sequence DR. FAD contacts are provided by residues 395–396 and 414–415; these read DI and DV. The stretch at 414 to 446 forms a coiled coil; that stretch reads DVKLALQGMNKVLENRAEELKLDFGVWRNELNV. Thiamine diphosphate is bound at residue 487 to 488; it reads QH. 508-509 lines the FAD pocket; it reads GG. Residues 511 to 513, 538 to 540, and 565 to 570 contribute to the thiamine diphosphate site; these read GAM, DGS, and NQHLGM. Positions 538, 565, and 567 each coordinate Mg(2+). Chlorimuron-ethyl contacts are provided by Trp-574 and Ser-653.

Belongs to the TPP enzyme family. As to quaternary structure, homodimer or homotetramer. The acetolactate synthase complex contains both large catalytic subunits and small regulatory subunits. Homodimer. The acetolactate synthase complex contains 4 homodimers of the large catalytic subunits, and 1 homotetramer of the small regulatory subunits. Requires Mg(2+) as cofactor. It depends on FAD as a cofactor. The cofactor is thiamine diphosphate.

The protein localises to the plastid. It localises to the chloroplast. The enzyme catalyses 2 pyruvate + H(+) = (2S)-2-acetolactate + CO2. It participates in amino-acid biosynthesis; L-isoleucine biosynthesis; L-isoleucine from 2-oxobutanoate: step 1/4. It functions in the pathway amino-acid biosynthesis; L-valine biosynthesis; L-valine from pyruvate: step 1/4. Its activity is regulated as follows. Inhibited by asymmetric aryl disulfides, triazolopyrimidine sulfonanilide compounds, isatin derivatives, and sulfonylurea and imidazolinone herbicides. Insensitive to feed-back inhibition by branched-chain amino acids. Catalyzes the formation of acetolactate from pyruvate, the first step in valine and isoleucine biosynthesis. This is Acetolactate synthase, chloroplastic (ALS) from Arabidopsis thaliana (Mouse-ear cress).